Consider the following 146-residue polypeptide: Deoxyuridine 5'-triphosphate nucleotidohydrolase (146 aa).

Substrate contacts are provided by residues 66 to 68 (RSG), Asn-79, 83 to 85 (TVD), and Lys-93.

This sequence belongs to the dUTPase family. Requires Mg(2+) as cofactor.

The enzyme catalyses dUTP + H2O = dUMP + diphosphate + H(+). Its pathway is pyrimidine metabolism; dUMP biosynthesis; dUMP from dCTP (dUTP route): step 2/2. In terms of biological role, this enzyme is involved in nucleotide metabolism: it produces dUMP, the immediate precursor of thymidine nucleotides and it decreases the intracellular concentration of dUTP so that uracil cannot be incorporated into DNA. The chain is Deoxyuridine 5'-triphosphate nucleotidohydrolase from Fusobacterium nucleatum subsp. nucleatum (strain ATCC 25586 / DSM 15643 / BCRC 10681 / CIP 101130 / JCM 8532 / KCTC 2640 / LMG 13131 / VPI 4355).